We begin with the raw amino-acid sequence, 54 residues long: Ovomucoid (54 aa).

One can recognise a Kazal-like domain in the interval 4-54 (VDCSDYPTHGCTLELKPICGSDNQTYSNKCGFCNAVAQSNGTLTLSHFGKC). Intrachain disulfides connect Cys-6/Cys-36, Cys-14/Cys-33, and Cys-22/Cys-54. N-linked (GlcNAc...) asparagine glycosylation is present at Asn-43.

It is found in the secreted. This chain is Ovomucoid, found in Aepypodius arfakianus (Wattled brush turkey).